The chain runs to 341 residues: MDHAADAHRTDLMTITRFVLNEQSKYPESRGDFTILLSHIVLGCKFVCSAVNKAGLAKLIGLAGETNIQGEEQKKLDVLSNDVFVNALVSSGRTSVLVSEEDEEATFVEPSKRGKYCVVFDPLDGSSNIDCGVSIGTIFGIYTLDHTDEPTTADVLKPGNEMVAAGYCMYGSSCMLVLSTGTGVHGFTLDPSLGEFILTHPDIKIPNKGNIYSVNEGNAQNWDGPTTKYVEKCKFPKDGSPAKSLRYVGSMVADVHRTLLYGGIFLYPADKKSPNGKLRVLYEVFPMSFLMEQAGGQAFTGKKRALDLVPEKIHERSPIFLGSYDDVEEIKALYAEEEKKN.

The Mg(2+) site is built by E71, E100, D121, L123, and D124. Residues 124 to 127, N215, Y247, Y267, and K277 contribute to the substrate site; that span reads DGSS. E283 serves as a coordination point for Mg(2+).

It belongs to the FBPase class 1 family. Mg(2+) is required as a cofactor.

It localises to the cytoplasm. The protein localises to the nucleus. It catalyses the reaction beta-D-fructose 1,6-bisphosphate + H2O = beta-D-fructose 6-phosphate + phosphate. In terms of biological role, catalyzes the first irreversible reaction from fructose-1,6-bisphosphate to fructose-6-phosphate and inorganic phosphate and plays an important regulatory role in sucrose biosynthesis and metabolism. Its activity is essential to regulate starch levels. Functions in fructose-mediated signaling independently of its catalytic activity in sugar metabolism. May act downstream of ABA2/GIN1, which is involved in abscisic acid (ABA) synthesis to regulate autotrophic transition and modulate early seedling establishment after seed germination. This is Fructose-1,6-bisphosphatase, cytosolic from Arabidopsis thaliana (Mouse-ear cress).